The primary structure comprises 298 residues: MMPIPANPTNASIQPQSLYDAWADLAWRAMLTEVNLSPKPGLVDRLNCGAHKDMALADFHRSAEAIRHWLPRFMEYGASCTRLPPESVLAGLRPLGMACEAAMFRATAGVNTHKGSIFSLGLLCAAIGRLYQLRQPITAETLCATAADFCRGLTTRELRQNNLQLTAGQRLYQQLGLTGARGEAEAGYPLVIRHALPHYRALLAQGRDPELALLDTLLLLMSLNGDTNVASRGGADGLRWLQQQAAVLLHQGGIRTPDDLVYLHRFDQQCIERNLSPGGSADLLIVTWFLAQISQVNH.

The protein belongs to the CitG/MdcB family.

The catalysed reaction is 3'-dephospho-CoA + ATP = 2'-(5''-triphospho-alpha-D-ribosyl)-3'-dephospho-CoA + adenine. This Salmonella choleraesuis (strain SC-B67) protein is Probable 2-(5''-triphosphoribosyl)-3'-dephosphocoenzyme-A synthase 2.